Here is a 205-residue protein sequence, read N- to C-terminus: Regulator of G-protein signaling 4 (205 aa).

Residues Cys2, Cys12, and Cys95 are each lipidated (S-palmitoyl cysteine). The RGS domain maps to 62 to 178 (SLENLISHEC…LKSRFYLDLV (117 aa)).

In terms of processing, palmitoylated on Cys-2 and/or Cys-12. Post-translationally, phosphorylated by cyclic GMP-dependent protein kinase.

Functionally, inhibits signal transduction by increasing the GTPase activity of G protein alpha subunits thereby driving them into their inactive GDP-bound form. Activity on G(z)-alpha is inhibited by phosphorylation of the G-protein. Activity on G(z)-alpha and G(i)-alpha-1 is inhibited by palmitoylation of the G-protein. The chain is Regulator of G-protein signaling 4 (RGS4) from Bos taurus (Bovine).